Reading from the N-terminus, the 217-residue chain is 3,4-dihydroxy-2-butanone 4-phosphate synthase (217 aa).

Residues 37–38, Asp42, 150–154, and Glu174 each bind D-ribulose 5-phosphate; these read RE and RGGHT. Mg(2+) is bound at residue Glu38. His153 contacts Mg(2+).

The protein belongs to the DHBP synthase family. Homodimer. Mg(2+) serves as cofactor. Requires Mn(2+) as cofactor.

The enzyme catalyses D-ribulose 5-phosphate = (2S)-2-hydroxy-3-oxobutyl phosphate + formate + H(+). Its pathway is cofactor biosynthesis; riboflavin biosynthesis; 2-hydroxy-3-oxobutyl phosphate from D-ribulose 5-phosphate: step 1/1. Catalyzes the conversion of D-ribulose 5-phosphate to formate and 3,4-dihydroxy-2-butanone 4-phosphate. This Escherichia fergusonii (strain ATCC 35469 / DSM 13698 / CCUG 18766 / IAM 14443 / JCM 21226 / LMG 7866 / NBRC 102419 / NCTC 12128 / CDC 0568-73) protein is 3,4-dihydroxy-2-butanone 4-phosphate synthase.